Consider the following 346-residue polypeptide: tRNA (guanine-N(7)-)-methyltransferase (346 aa).

S-adenosyl-L-methionine-binding positions include G101 and 124-125; that span reads EI. The disordered stretch occupies residues 149 to 191; the sequence is LKSAGGGGSDAAPESPAAPPTPSEAASPDSTTPSEQQAPTTLV. The span at 171–182 shows a compositional bias: low complexity; the sequence is SEAASPDSTTPS. Residues 204-205 and C224 contribute to the S-adenosyl-L-methionine site; that span reads NT. Residue D227 is part of the active site. S-adenosyl-L-methionine is bound at residue 318–320; it reads TEE.

It belongs to the class I-like SAM-binding methyltransferase superfamily. TrmB family. In terms of assembly, forms a complex with trm82.

It is found in the nucleus. The enzyme catalyses guanosine(46) in tRNA + S-adenosyl-L-methionine = N(7)-methylguanosine(46) in tRNA + S-adenosyl-L-homocysteine. It functions in the pathway tRNA modification; N(7)-methylguanine-tRNA biosynthesis. Its function is as follows. Catalyzes the formation of N(7)-methylguanine at position 46 (m7G46) in tRNA. This Aspergillus terreus (strain NIH 2624 / FGSC A1156) protein is tRNA (guanine-N(7)-)-methyltransferase (trm8).